Here is a 149-residue protein sequence, read N- to C-terminus: Calmodulin-3 (149 aa).

A2 carries the post-translational modification N-acetylalanine. 4 consecutive EF-hand domains span residues 8-43, 44-79, 81-116, and 117-149; these read DQIA…LGQN, PTEA…KMKD, DSEE…LGEK, and LTDE…MMAK. Ca(2+) contacts are provided by D21, D23, D25, C27, E32, D57, D59, N61, T63, E68, D94, D96, N98, and E105. Residue K116 is modified to N6,N6,N6-trimethyllysine. Positions 130, 132, 134, 136, and 141 each coordinate Ca(2+).

Belongs to the calmodulin family.

Its function is as follows. Calmodulin mediates the control of a large number of enzymes, ion channels and other proteins by Ca(2+). Among the enzymes to be stimulated by the calmodulin-Ca(2+) complex are a number of protein kinases and phosphatases. This chain is Calmodulin-3 (CAM3), found in Oryza sativa subsp. japonica (Rice).